The chain runs to 493 residues: UPF0699 transmembrane protein YdbT (493 aa).

Helical transmembrane passes span 18-38 (CHTIIQTIKNIILPFFFVYIV), 46-66 (FYGAIALGVLFIWLVAASIIK), 188-208 (LMAASTSGGIGVIISAVFALI), 232-252 (IGIYAVLIFIGLFIAWIFSIA), 370-390 (VIFSLFLIIPLCIFFQPWGYL), and 393-413 (ILLPIELLFGYLAYKEAAWTI).

It belongs to the UPF0699 family.

Its subcellular location is the cell membrane. The protein is UPF0699 transmembrane protein YdbT (ydbT) of Bacillus subtilis (strain 168).